A 717-amino-acid polypeptide reads, in one-letter code: Catalase-peroxidase (717 aa).

Residues 1 to 20 (MSGKCPVMHGGNTSTGTSNK) are disordered. Residues 11–20 (GNTSTGTSNK) show a composition bias toward polar residues. The tryptophyl-tyrosyl-methioninium (Trp-Tyr) (with M-245) cross-link spans 91–219 (WHSAGSYRLA…LAAVQMGLIY (129 aa)). The Proton acceptor role is filled by His-92. The segment at residues 219–245 (YVNPEGVNGQPDPQKTAEQVRETFARM) is a cross-link (tryptophyl-tyrosyl-methioninium (Tyr-Met) (with W-91)). His-260 serves as a coordination point for heme b.

The protein belongs to the peroxidase family. Peroxidase/catalase subfamily. In terms of assembly, homodimer or homotetramer. It depends on heme b as a cofactor. Formation of the three residue Trp-Tyr-Met cross-link is important for the catalase, but not the peroxidase activity of the enzyme.

It catalyses the reaction H2O2 + AH2 = A + 2 H2O. The catalysed reaction is 2 H2O2 = O2 + 2 H2O. Functionally, bifunctional enzyme with both catalase and broad-spectrum peroxidase activity. The chain is Catalase-peroxidase from Chromohalobacter salexigens (strain ATCC BAA-138 / DSM 3043 / CIP 106854 / NCIMB 13768 / 1H11).